The primary structure comprises 342 residues: tRNA N6-adenosine threonylcarbamoyltransferase (342 aa).

Histidine 114 and histidine 118 together coordinate Fe cation. Residues 136 to 140, aspartate 169, glycine 182, aspartate 186, and asparagine 275 each bind substrate; that span reads LVSGG. A Fe cation-binding site is contributed by aspartate 301.

It belongs to the KAE1 / TsaD family. Fe(2+) is required as a cofactor.

The protein localises to the cytoplasm. The catalysed reaction is L-threonylcarbamoyladenylate + adenosine(37) in tRNA = N(6)-L-threonylcarbamoyladenosine(37) in tRNA + AMP + H(+). Required for the formation of a threonylcarbamoyl group on adenosine at position 37 (t(6)A37) in tRNAs that read codons beginning with adenine. Is involved in the transfer of the threonylcarbamoyl moiety of threonylcarbamoyl-AMP (TC-AMP) to the N6 group of A37, together with TsaE and TsaB. TsaD likely plays a direct catalytic role in this reaction. In Streptococcus pyogenes serotype M4 (strain MGAS10750), this protein is tRNA N6-adenosine threonylcarbamoyltransferase.